Consider the following 324-residue polypeptide: MLSKKFTPLSLKNAAKCINNSLRSTYAITGVNLTRGLATNSKVDPKTYAPKPEFSSIAVREMLRKSCLHEFTDEEVATRIELAAAYRLFGLEHWNENILNHLTAKVEEPDGTASFLINPYGLRYGEITASSLIKVDEDGNIKHPGVTGDVFGINRAGYVIHSAIHRARPDVKSIMHNHYPYAAGVSCVKHGFLELAQTSHQSGPVTYHDYHGIVVDKGEQKSLAEDIANKDILILRNHGIITAAESVGAAYYLMYQFLAATEIQTHASANALGDMNNLFIPNNKLVEKTFDVTREKHFSGAKYGIKELSAYMRLLDDLDSSYRT.

Belongs to the aldolase class II family. Adducin subfamily.

This Schizosaccharomyces pombe (strain 972 / ATCC 24843) (Fission yeast) protein is Adducin-related protein C1289.14.